The following is a 315-amino-acid chain: Ribose-phosphate pyrophosphokinase (315 aa).

ATP contacts are provided by residues 37-39 and 96-97; these read DGE and RQ. H131 and D171 together coordinate Mg(2+). K195 is a catalytic residue. D-ribose 5-phosphate is bound by residues R197, D221, and 225 to 229; that span reads DTGGT.

Belongs to the ribose-phosphate pyrophosphokinase family. Class I subfamily. In terms of assembly, homohexamer. Mg(2+) is required as a cofactor.

Its subcellular location is the cytoplasm. The catalysed reaction is D-ribose 5-phosphate + ATP = 5-phospho-alpha-D-ribose 1-diphosphate + AMP + H(+). It functions in the pathway metabolic intermediate biosynthesis; 5-phospho-alpha-D-ribose 1-diphosphate biosynthesis; 5-phospho-alpha-D-ribose 1-diphosphate from D-ribose 5-phosphate (route I): step 1/1. Its function is as follows. Involved in the biosynthesis of the central metabolite phospho-alpha-D-ribosyl-1-pyrophosphate (PRPP) via the transfer of pyrophosphoryl group from ATP to 1-hydroxyl of ribose-5-phosphate (Rib-5-P). In Haemophilus influenzae (strain ATCC 51907 / DSM 11121 / KW20 / Rd), this protein is Ribose-phosphate pyrophosphokinase.